The primary structure comprises 80 residues: Acyl carrier protein (80 aa).

Residues 4–79 (EAILEKVRSI…DAVKYIEDKQ (76 aa)) form the Carrier domain. Ser-39 carries the post-translational modification O-(pantetheine 4'-phosphoryl)serine.

This sequence belongs to the acyl carrier protein (ACP) family. Post-translationally, 4'-phosphopantetheine is transferred from CoA to a specific serine of apo-ACP by AcpS. This modification is essential for activity because fatty acids are bound in thioester linkage to the sulfhydryl of the prosthetic group.

The protein localises to the cytoplasm. It participates in lipid metabolism; fatty acid biosynthesis. In terms of biological role, carrier of the growing fatty acid chain in fatty acid biosynthesis. The protein is Acyl carrier protein of Synechococcus sp. (strain CC9902).